A 209-amino-acid chain; its full sequence is Orotate phosphoribosyltransferase (209 aa).

5-phospho-alpha-D-ribose 1-diphosphate contacts are provided by residues Arg96, Lys100, His102, and 122 to 130 (EDLISTGGS). Ser126 contributes to the orotate binding site.

Belongs to the purine/pyrimidine phosphoribosyltransferase family. PyrE subfamily. As to quaternary structure, homodimer. The cofactor is Mg(2+).

The catalysed reaction is orotidine 5'-phosphate + diphosphate = orotate + 5-phospho-alpha-D-ribose 1-diphosphate. Its pathway is pyrimidine metabolism; UMP biosynthesis via de novo pathway; UMP from orotate: step 1/2. Functionally, catalyzes the transfer of a ribosyl phosphate group from 5-phosphoribose 1-diphosphate to orotate, leading to the formation of orotidine monophosphate (OMP). This is Orotate phosphoribosyltransferase from Streptococcus agalactiae serotype Ia (strain ATCC 27591 / A909 / CDC SS700).